Consider the following 214-residue polypeptide: A-type ATP synthase subunit D (214 aa).

Belongs to the V-ATPase D subunit family. In terms of assembly, has multiple subunits with at least A(3), B(3), C, D, E, F, H, I and proteolipid K(x).

The protein resides in the cell membrane. Component of the A-type ATP synthase that produces ATP from ADP in the presence of a proton gradient across the membrane. This chain is A-type ATP synthase subunit D, found in Pyrococcus horikoshii (strain ATCC 700860 / DSM 12428 / JCM 9974 / NBRC 100139 / OT-3).